We begin with the raw amino-acid sequence, 367 residues long: tRNA(Ile)-lysidine synthase, chloroplastic (367 aa).

64-69 (SGGQDS) serves as a coordination point for ATP.

This sequence belongs to the tRNA(Ile)-lysidine synthase family.

It localises to the plastid. Its subcellular location is the chloroplast. It catalyses the reaction cytidine(34) in tRNA(Ile2) + L-lysine + ATP = lysidine(34) in tRNA(Ile2) + AMP + diphosphate + H(+). In terms of biological role, ligates lysine onto the cytidine present at position 34 of the AUA codon-specific tRNA(Ile) that contains the anticodon CAU, in an ATP-dependent manner. Cytidine is converted to lysidine, thus changing the amino acid specificity of the tRNA from methionine to isoleucine. The protein is tRNA(Ile)-lysidine synthase, chloroplastic of Nephroselmis olivacea (Green alga).